The following is a 1295-amino-acid chain: Nonribosomal peptide synthetase resC (1295 aa).

The disordered stretch occupies residues 1-24 (MDLTTTSHARVDSGGVPFTSSLND). The segment at 221 to 624 (KDVVDASPQA…EGRKDTQIKL (404 aa)) is adenylation. One can recognise a Carrier domain in the interval 759–836 (ESANPAEENL…DQANLLRPLV (78 aa)). An O-(pantetheine 4'-phosphoryl)serine modification is found at S796. Residues 873 to 1284 (EDVYPCTPYQ…DEYSQTLHEL (412 aa)) form a condensation region.

The protein belongs to the NRP synthetase family. The cofactor is pantetheine 4'-phosphate.

It carries out the reaction restrictinol + glycine + H(+) = restricticin + H2O. It functions in the pathway antifungal biosynthesis. Nonribosomal peptide synthetase; part of the gene cluster that mediates the biosynthesis of the tetrahydropyranyl antifungal agent restricticin that acts as an inhibitor of CYP51 and blocks the ergosterol biosynthesis. Within the pathway, resC catalyzes the C3 esterification of restrictinol with glycine to yield restricticin. ResC represents an example of the emerging class of single-module NRPS-like enzymes that perform esterification reactions. The highly reducing polyketide synthase resH, the short chain dehydrogenase resG, the cyclase resF, the FAD-dependent monooxygenase resA and the enoylreductase resD are required to generate the first stable intermediate desmethylrestrictinol. ResH with resD biosynthesize the first polyketide chain intermediate that is reduced by resG, followed by epoxidation by resA before 6-endo cyclization via epoxide opening by resF leads to desmethylrestrictinol. The methyltransferase resE then catalyzes the C4 O-methylation of desmethylrestrictinol to produce restrictinol, and the nonribosomal peptide synthetase resC catalyzes the C3 esterification of restrictinol with glycine that leads to restricticin. The chain is Nonribosomal peptide synthetase resC from Aspergillus sclerotiorum.